The following is an 81-amino-acid chain: Sulfur carrier protein TusA (81 aa).

The Cysteine persulfide intermediate role is filled by C19.

The protein belongs to the sulfur carrier protein TusA family.

It localises to the cytoplasm. Its function is as follows. Sulfur carrier protein which probably makes part of a sulfur-relay system. In Vibrio vulnificus (strain CMCP6), this protein is Sulfur carrier protein TusA.